The sequence spans 403 residues: Na(+)/H(+) antiporter NhaA (403 aa).

12 consecutive transmembrane segments (helical) span residues 25-45, 70-90, 105-125, 136-156, 165-185, 188-208, 213-233, 234-254, 269-289, 302-322, 340-360, and 369-389; these read IAGL…NSPF, LILW…GLEI, IALP…IFLA, GWAV…AMLG, VFLT…IALA, EGLS…LIVL, VASL…VLES, GVHS…RVSG, VALL…LGGV, IILG…GLAV, GAAL…GLAF, and VNLA…VVLA.

This sequence belongs to the NhaA Na(+)/H(+) (TC 2.A.33) antiporter family.

Its subcellular location is the cell inner membrane. It catalyses the reaction Na(+)(in) + 2 H(+)(out) = Na(+)(out) + 2 H(+)(in). Its function is as follows. Na(+)/H(+) antiporter that extrudes sodium in exchange for external protons. The chain is Na(+)/H(+) antiporter NhaA from Maricaulis maris (strain MCS10) (Caulobacter maris).